Here is a 372-residue protein sequence, read N- to C-terminus: DNA replication and repair protein RecF (372 aa).

30-37 (GENAQGKT) is an ATP binding site.

It belongs to the RecF family.

The protein resides in the cytoplasm. Its function is as follows. The RecF protein is involved in DNA metabolism; it is required for DNA replication and normal SOS inducibility. RecF binds preferentially to single-stranded, linear DNA. It also seems to bind ATP. This Geobacillus thermodenitrificans (strain NG80-2) protein is DNA replication and repair protein RecF.